We begin with the raw amino-acid sequence, 165 residues long: Endoribonuclease YbeY (165 aa).

The Zn(2+) site is built by histidine 130, histidine 134, and histidine 140.

It belongs to the endoribonuclease YbeY family. It depends on Zn(2+) as a cofactor.

The protein localises to the cytoplasm. Its function is as follows. Single strand-specific metallo-endoribonuclease involved in late-stage 70S ribosome quality control and in maturation of the 3' terminus of the 16S rRNA. This is Endoribonuclease YbeY from Streptococcus sanguinis (strain SK36).